We begin with the raw amino-acid sequence, 431 residues long: MLKQIDYQGKLEEIAEKFQGRKTEVSKEVNKTVQQIVADIQKNGDTALFNYAKKFDGYDVNTSNLLVTRMEREAGLEQIDEDYFRILRRTKSQIEEFHKHQLGNSWNIFKENGVIMGQIARPLERVALYVPGGTAAYPSTVIMNAVPALLAGVKEIIMITPVKADGKVNPNILAAAEVCGIETIYKVGGAQGVAAVAYGTESIPKVDKIVGPGNIFVATAKKICYGVVDIDMIAGPSEVLVIADKTAKPKYIAADLMAQAEHDKLASAILVTTSEKLVQQVDEELNRQVQNLERREIIESSIRNYGGAIVVKNIDDAFDVSNQLAPEHLEVLTSEPLTQLPKIKNAGSIFIGEYTPEPLGDYMSGSNHVLPTGGTAKFYSGLGVYNFIKYLTYSYYPKEVLADFKEDVETFAKSEGLTAHANSISVRFDEM.

The NAD(+) site is built by Tyr-129, Gln-191, and Asn-214. Residues Ser-237, Gln-259, and His-262 each coordinate substrate. Positions 259 and 262 each coordinate Zn(2+). Catalysis depends on proton acceptor residues Glu-327 and His-328. Substrate-binding residues include His-328, Asp-361, Glu-415, and His-420. Position 361 (Asp-361) interacts with Zn(2+). His-420 provides a ligand contact to Zn(2+).

The protein belongs to the histidinol dehydrogenase family. It depends on Zn(2+) as a cofactor.

The enzyme catalyses L-histidinol + 2 NAD(+) + H2O = L-histidine + 2 NADH + 3 H(+). It participates in amino-acid biosynthesis; L-histidine biosynthesis; L-histidine from 5-phospho-alpha-D-ribose 1-diphosphate: step 9/9. Its function is as follows. Catalyzes the sequential NAD-dependent oxidations of L-histidinol to L-histidinaldehyde and then to L-histidine. The chain is Histidinol dehydrogenase (hisD) from Lactococcus lactis subsp. lactis (strain IL1403) (Streptococcus lactis).